The sequence spans 361 residues: Phosphoserine aminotransferase (361 aa).

Residues Ser9 and Arg42 each coordinate L-glutamate. Pyridoxal 5'-phosphate-binding positions include Ala76–Arg77, Trp102, Thr153, Asp173, and Gln196. Lys197 bears the N6-(pyridoxal phosphate)lysine mark. Asn238 to Thr239 contributes to the pyridoxal 5'-phosphate binding site.

It belongs to the class-V pyridoxal-phosphate-dependent aminotransferase family. SerC subfamily. As to quaternary structure, homodimer. Requires pyridoxal 5'-phosphate as cofactor.

The protein localises to the cytoplasm. It catalyses the reaction O-phospho-L-serine + 2-oxoglutarate = 3-phosphooxypyruvate + L-glutamate. The enzyme catalyses 4-(phosphooxy)-L-threonine + 2-oxoglutarate = (R)-3-hydroxy-2-oxo-4-phosphooxybutanoate + L-glutamate. It participates in amino-acid biosynthesis; L-serine biosynthesis; L-serine from 3-phospho-D-glycerate: step 2/3. The protein operates within cofactor biosynthesis; pyridoxine 5'-phosphate biosynthesis; pyridoxine 5'-phosphate from D-erythrose 4-phosphate: step 3/5. In terms of biological role, catalyzes the reversible conversion of 3-phosphohydroxypyruvate to phosphoserine and of 3-hydroxy-2-oxo-4-phosphonooxybutanoate to phosphohydroxythreonine. The chain is Phosphoserine aminotransferase from Erwinia tasmaniensis (strain DSM 17950 / CFBP 7177 / CIP 109463 / NCPPB 4357 / Et1/99).